A 34-amino-acid chain; its full sequence is U2-theraphotoxin-Bs1a (34 aa).

3 cysteine pairs are disulfide-bonded: Cys2-Cys16, Cys9-Cys21, and Cys15-Cys28.

In terms of tissue distribution, expressed by the venom gland.

It is found in the secreted. The sequence is that of U2-theraphotoxin-Bs1a from Brachypelma smithi (Mexican red knee tarantula).